Here is an 84-residue protein sequence, read N- to C-terminus: Small ribosomal subunit protein uS17 (84 aa).

The protein belongs to the universal ribosomal protein uS17 family. As to quaternary structure, part of the 30S ribosomal subunit.

Functionally, one of the primary rRNA binding proteins, it binds specifically to the 5'-end of 16S ribosomal RNA. The polypeptide is Small ribosomal subunit protein uS17 (Ureaplasma parvum serovar 3 (strain ATCC 27815 / 27 / NCTC 11736)).